A 434-amino-acid chain; its full sequence is MRVLVLGSGVIGTTSAWYLRQAGFEVTVIDRQPGPALETSFANAGQLSFGYTSPWAAPGVPKKAIGWLFEKHAPLAIKPGMDLAQYRWLWQMLRNCTHERYAINKARMVRMSEYSRDCLNELRAQIGIEFEGRDLGTTQLFRTQQQLDASAQDIEILAQYGVPYEVLDRAGIIQAEPALAHVDGLVGALRLPRDQTGDCQLFTRRLAQMCVDAGVEFRFDQDITGLEFDGDRITGVRIDGKLETADRFVVALGSYSPALVAPLGMRLPVYPLKGYSLTLPITDPAMAPTSTILDESYKVAVTRFDDRIRVGGMAEVAGFDLSLSQRRRETLELVVSDLYPKGGDLSRAQFWTGLRPATPDGTPVIGATPFRNLYLNTGHGTLGWTMACGSGRYLADLMSARQPQISTEGLDIFRYGQYGHAPQQENRTCVLPAR.

3 to 17 (VLVLGSGVIGTTSAW) contributes to the FAD binding site.

It belongs to the DadA oxidoreductase family. FAD serves as cofactor.

The catalysed reaction is a D-alpha-amino acid + A + H2O = a 2-oxocarboxylate + AH2 + NH4(+). The protein operates within amino-acid degradation; D-alanine degradation; NH(3) and pyruvate from D-alanine: step 1/1. Its function is as follows. Oxidative deamination of D-amino acids. In Stenotrophomonas maltophilia (strain K279a), this protein is D-amino acid dehydrogenase.